The chain runs to 161 residues: Putative 4-hydroxy-4-methyl-2-oxoglutarate aldolase (161 aa).

Substrate is bound by residues 78-81 (GDVI) and R100. An a divalent metal cation-binding site is contributed by D101.

The protein belongs to the class II aldolase/RraA-like family. Homotrimer. It depends on a divalent metal cation as a cofactor.

The catalysed reaction is 4-hydroxy-4-methyl-2-oxoglutarate = 2 pyruvate. It catalyses the reaction oxaloacetate + H(+) = pyruvate + CO2. Catalyzes the aldol cleavage of 4-hydroxy-4-methyl-2-oxoglutarate (HMG) into 2 molecules of pyruvate. Also contains a secondary oxaloacetate (OAA) decarboxylase activity due to the common pyruvate enolate transition state formed following C-C bond cleavage in the retro-aldol and decarboxylation reactions. In Mycobacterium avium (strain 104), this protein is Putative 4-hydroxy-4-methyl-2-oxoglutarate aldolase.